The primary structure comprises 210 residues: Cytochrome c biogenesis ATP-binding export protein CcmA (210 aa).

An ABC transporter domain is found at 4–207 (LAVRDLAVAR…RQSRPAGFNE (204 aa)). 36–43 (GPNGIGKT) contacts ATP.

Belongs to the ABC transporter superfamily. CcmA exporter (TC 3.A.1.107) family. In terms of assembly, the complex is composed of two ATP-binding proteins (CcmA) and two transmembrane proteins (CcmB).

The protein localises to the cell inner membrane. It carries out the reaction heme b(in) + ATP + H2O = heme b(out) + ADP + phosphate + H(+). Part of the ABC transporter complex CcmAB involved in the biogenesis of c-type cytochromes; once thought to export heme, this seems not to be the case, but its exact role is uncertain. Responsible for energy coupling to the transport system. The sequence is that of Cytochrome c biogenesis ATP-binding export protein CcmA from Paracoccus denitrificans (strain Pd 1222).